A 192-amino-acid chain; its full sequence is MITISDAAQAHFVKLLADQPEGTHIRVFVISPGTAQAECGVSYCPPDAVESDDIELEFNGFSAMVDEKSAPFLEEASIDFVTDQLGSQLTLKAPNAKMRKVSSDAPLAERVEYVIQSEINPQLASHGGNIMLVEITQEGVAVLQFGGGCNGCSQVDITLKDGIEKQLLDMFPGELTGVRDVTDHQHGEHSYA.

[4Fe-4S] cluster-binding residues include cysteine 149 and cysteine 152.

Belongs to the NfuA family. In terms of assembly, homodimer. [4Fe-4S] cluster is required as a cofactor.

Involved in iron-sulfur cluster biogenesis. Binds a 4Fe-4S cluster, can transfer this cluster to apoproteins, and thereby intervenes in the maturation of Fe/S proteins. Could also act as a scaffold/chaperone for damaged Fe/S proteins. This is Fe/S biogenesis protein NfuA from Shewanella sp. (strain MR-7).